A 192-amino-acid polypeptide reads, in one-letter code: Adenylate kinase (192 aa).

Residue 10–18 (GVPGVGSTT) participates in ATP binding.

It belongs to the archaeal adenylate kinase family. In terms of assembly, monomer.

The protein resides in the cytoplasm. The catalysed reaction is AMP + ATP = 2 ADP. This chain is Adenylate kinase, found in Methanococcus vannielii (strain ATCC 35089 / DSM 1224 / JCM 13029 / OCM 148 / SB).